The chain runs to 593 residues: UvrABC system protein C (593 aa).

The region spanning 17-94 (MEPGCYLMKD…IKQYQPRYNI (78 aa)) is the GIY-YIG domain. The UVR domain occupies 199-234 (KTILKSLEERMLTASESLDFERAKEYRDLIQHIQNL).

It belongs to the UvrC family. In terms of assembly, interacts with UvrB in an incision complex.

It localises to the cytoplasm. Functionally, the UvrABC repair system catalyzes the recognition and processing of DNA lesions. UvrC both incises the 5' and 3' sides of the lesion. The N-terminal half is responsible for the 3' incision and the C-terminal half is responsible for the 5' incision. The protein is UvrABC system protein C of Staphylococcus aureus (strain MSSA476).